A 725-amino-acid polypeptide reads, in one-letter code: Ribosomal RNA large subunit methyltransferase K/L (725 aa).

The THUMP domain maps to 46–157 (VAYRLCLWSR…RGEAVLSLDL (112 aa)).

The protein belongs to the methyltransferase superfamily. RlmKL family.

The protein resides in the cytoplasm. The enzyme catalyses guanosine(2445) in 23S rRNA + S-adenosyl-L-methionine = N(2)-methylguanosine(2445) in 23S rRNA + S-adenosyl-L-homocysteine + H(+). It carries out the reaction guanosine(2069) in 23S rRNA + S-adenosyl-L-methionine = N(2)-methylguanosine(2069) in 23S rRNA + S-adenosyl-L-homocysteine + H(+). Functionally, specifically methylates the guanine in position 2445 (m2G2445) and the guanine in position 2069 (m7G2069) of 23S rRNA. The polypeptide is Ribosomal RNA large subunit methyltransferase K/L (Ectopseudomonas mendocina (strain ymp) (Pseudomonas mendocina)).